The chain runs to 392 residues: GTPase Obg (392 aa).

Residues 1-159 (MKFVDEATIL…RDLQLELMLL (159 aa)) enclose the Obg domain. The disordered stretch occupies residues 127–146 (NTRFKSSVNRTPRQKTMGTP). Positions 129 to 143 (RFKSSVNRTPRQKTM) are enriched in polar residues. The region spanning 160 to 333 (ADVGMLGLPN…LCWDVMAFIK (174 aa)) is the OBG-type G domain. Residues 166 to 173 (GLPNAGKS), 191 to 195 (FTTLV), 213 to 216 (DIPG), 283 to 286 (NKVD), and 314 to 316 (SAA) contribute to the GTP site. Residues Ser-173 and Thr-193 each contribute to the Mg(2+) site. A disordered region spans residues 360–392 (QLEEAQPEVEEDDDWDDDWDEDDEEGVETIYQR). Residues 364 to 386 (AQPEVEEDDDWDDDWDEDDEEGV) are compositionally biased toward acidic residues.

Belongs to the TRAFAC class OBG-HflX-like GTPase superfamily. OBG GTPase family. In terms of assembly, monomer. It depends on Mg(2+) as a cofactor.

The protein resides in the cytoplasm. An essential GTPase which binds GTP, GDP and possibly (p)ppGpp with moderate affinity, with high nucleotide exchange rates and a fairly low GTP hydrolysis rate. Plays a role in control of the cell cycle, stress response, ribosome biogenesis and in those bacteria that undergo differentiation, in morphogenesis control. The chain is GTPase Obg from Erwinia tasmaniensis (strain DSM 17950 / CFBP 7177 / CIP 109463 / NCPPB 4357 / Et1/99).